Reading from the N-terminus, the 198-residue chain is Sorcin (198 aa).

4 consecutive EF-hand domains span residues 45–64 (QDGQ…SGIA), 70–98 (FNLE…FKEL), 100–135 (AVLN…MGFR), and 151–169 (SGKI…LRAL). Ca(2+) is bound by residues Asp83, Asp85, Ser87, Thr89, Glu94, Asp113, Asp115, Ser117, Thr119, and Glu124. The residue at position 178 (Ser178) is a Phosphoserine.

As to quaternary structure, homodimer. Interacts with GCA, RYR2 and ANXA7. Detected in cardiac myocytes.

It localises to the cytoplasm. Its subcellular location is the sarcoplasmic reticulum membrane. Calcium-binding protein that modulates excitation-contraction coupling in the heart. Contributes to calcium homeostasis in the heart sarcoplasmic reticulum. Modulates the activity of RYR2 calcium channels. This chain is Sorcin (Sri), found in Mus musculus (Mouse).